The sequence spans 411 residues: uncharacterized protein (411 aa).

This sequence in the C-terminal section; belongs to the PAPS reductase family.

This is an uncharacterized protein from Methanocaldococcus jannaschii (strain ATCC 43067 / DSM 2661 / JAL-1 / JCM 10045 / NBRC 100440) (Methanococcus jannaschii).